A 252-amino-acid chain; its full sequence is LexA repressor (252 aa).

Residues 1-46 form a disordered region; that stretch reads MPEENRGGHQPYTEESSVSALHPVRTDDSVGSSAEQTGDAPTLTER. Residues 67–87 constitute a DNA-binding region (H-T-H motif); the sequence is IREIGEAVGLSSPSSVAHQLK. Residues serine 176 and lysine 213 each act as for autocatalytic cleavage activity in the active site.

The protein belongs to the peptidase S24 family. As to quaternary structure, homodimer.

The catalysed reaction is Hydrolysis of Ala-|-Gly bond in repressor LexA.. Its function is as follows. Represses a number of genes involved in the response to DNA damage (SOS response), including recA and lexA. In the presence of single-stranded DNA, RecA interacts with LexA causing an autocatalytic cleavage which disrupts the DNA-binding part of LexA, leading to derepression of the SOS regulon and eventually DNA repair. In Thermobifida fusca (strain YX), this protein is LexA repressor.